The chain runs to 350 residues: Small ribosomal subunit biogenesis GTPase RsgA (350 aa).

Over residues 1–17 (MSKNKLSKGQQRRVQAN) the composition is skewed to polar residues. The interval 1-35 (MSKNKLSKGQQRRVQANHQRRLRTDRKPELDDSQL) is disordered. Positions 103–273 (TSVLTRPDLY…VIDSPGVREF (171 aa)) constitute a CP-type G domain. Residues 159 to 162 (NKID) and 213 to 221 (GQSGVGKSS) each bind GTP. 4 residues coordinate Zn(2+): cysteine 297, cysteine 302, histidine 304, and cysteine 310.

The protein belongs to the TRAFAC class YlqF/YawG GTPase family. RsgA subfamily. Monomer. Associates with 30S ribosomal subunit, binds 16S rRNA. Zn(2+) is required as a cofactor.

It localises to the cytoplasm. One of several proteins that assist in the late maturation steps of the functional core of the 30S ribosomal subunit. Helps release RbfA from mature subunits. May play a role in the assembly of ribosomal proteins into the subunit. Circularly permuted GTPase that catalyzes slow GTP hydrolysis, GTPase activity is stimulated by the 30S ribosomal subunit. In Yersinia pseudotuberculosis serotype O:1b (strain IP 31758), this protein is Small ribosomal subunit biogenesis GTPase RsgA.